The primary structure comprises 508 residues: Bifunctional purine biosynthesis protein PurH (508 aa).

The MGS-like domain occupies 1 to 145; sequence MIKRALLSTY…KNYKDVIVVV (145 aa).

Belongs to the PurH family.

The catalysed reaction is (6R)-10-formyltetrahydrofolate + 5-amino-1-(5-phospho-beta-D-ribosyl)imidazole-4-carboxamide = 5-formamido-1-(5-phospho-D-ribosyl)imidazole-4-carboxamide + (6S)-5,6,7,8-tetrahydrofolate. The enzyme catalyses IMP + H2O = 5-formamido-1-(5-phospho-D-ribosyl)imidazole-4-carboxamide. It functions in the pathway purine metabolism; IMP biosynthesis via de novo pathway; 5-formamido-1-(5-phospho-D-ribosyl)imidazole-4-carboxamide from 5-amino-1-(5-phospho-D-ribosyl)imidazole-4-carboxamide (10-formyl THF route): step 1/1. The protein operates within purine metabolism; IMP biosynthesis via de novo pathway; IMP from 5-formamido-1-(5-phospho-D-ribosyl)imidazole-4-carboxamide: step 1/1. The chain is Bifunctional purine biosynthesis protein PurH from Petrotoga mobilis (strain DSM 10674 / SJ95).